A 392-amino-acid chain; its full sequence is Aspartate aminotransferase (392 aa).

Residues Gly-40, Trp-126, and Asn-176 each contribute to the L-aspartate site. Lys-239 carries the post-translational modification N6-(pyridoxal phosphate)lysine.

It belongs to the class-I pyridoxal-phosphate-dependent aminotransferase family. Homodimer. The cofactor is pyridoxal 5'-phosphate.

It is found in the cytoplasm. The catalysed reaction is L-aspartate + 2-oxoglutarate = oxaloacetate + L-glutamate. This chain is Aspartate aminotransferase, found in Bacillus sp. (strain YM-2).